A 197-amino-acid polypeptide reads, in one-letter code: Imidazoleglycerol-phosphate dehydratase (197 aa).

Belongs to the imidazoleglycerol-phosphate dehydratase family.

The protein resides in the cytoplasm. The catalysed reaction is D-erythro-1-(imidazol-4-yl)glycerol 3-phosphate = 3-(imidazol-4-yl)-2-oxopropyl phosphate + H2O. It participates in amino-acid biosynthesis; L-histidine biosynthesis; L-histidine from 5-phospho-alpha-D-ribose 1-diphosphate: step 6/9. The chain is Imidazoleglycerol-phosphate dehydratase from Azotobacter vinelandii (strain DJ / ATCC BAA-1303).